Here is a 56-residue protein sequence, read N- to C-terminus: MAVQKSKKSRSMRGMRRSHDALTTMALSVDPTSGETHLRHNVTADGFYRGRKVINK.

The segment covering 1–16 has biased composition (basic residues); that stretch reads MAVQKSKKSRSMRGMR. Positions 1–22 are disordered; it reads MAVQKSKKSRSMRGMRRSHDAL.

This sequence belongs to the bacterial ribosomal protein bL32 family.

The polypeptide is Large ribosomal subunit protein bL32 (Aliivibrio salmonicida (strain LFI1238) (Vibrio salmonicida (strain LFI1238))).